We begin with the raw amino-acid sequence, 160 residues long: Cytochrome b6-f complex subunit 4 (160 aa).

The next 3 helical transmembrane spans lie at 36 to 56 (LLYIFPVVILGTIACNVGLAI), 95 to 115 (LLGVLLMVSVPSGLLTVPFLE), and 131 to 151 (TVFLIGTVVALWLGIGATLPI).

This sequence belongs to the cytochrome b family. PetD subfamily. The 4 large subunits of the cytochrome b6-f complex are cytochrome b6, subunit IV (17 kDa polypeptide, petD), cytochrome f and the Rieske protein, while the 4 small subunits are petG, petL, petM and petN. The complex functions as a dimer.

The protein resides in the plastid. The protein localises to the chloroplast thylakoid membrane. In terms of biological role, component of the cytochrome b6-f complex, which mediates electron transfer between photosystem II (PSII) and photosystem I (PSI), cyclic electron flow around PSI, and state transitions. This is Cytochrome b6-f complex subunit 4 from Oenothera elata subsp. hookeri (Hooker's evening primrose).